The chain runs to 928 residues: DNA-binding protein RFX6 (928 aa).

Disordered stretches follow at residues 1-22 (MAKV…QVSP) and 53-102 (PGGA…AADL). Residues 92–101 (SHDSKTKAAD) are compositionally biased toward basic and acidic residues. Residues 124-199 (TLQWLEENYI…YHYYGIGIKE (76 aa)) constitute a DNA-binding region (RFX-type winged-helix).

The protein belongs to the RFX family. As to quaternary structure, interacts with RFX3.

It localises to the nucleus. Its function is as follows. Transcription factor required to direct islet cell differentiation during endocrine pancreas development. Specifically required for the differentiation of 4 of the 5 islet cell types and for the production of insulin. Not required for pancreatic PP (polypeptide-producing) cells differentiation. Acts downstream of NEUROG3 and regulates the transcription factors involved in beta-cell maturation and function, thereby restricting the expression of the beta-cell differentiation and specification genes, and thus the beta-cell fate choice. Activates transcription by forming a heterodimer with RFX3 and binding to the X-box in the promoter of target genes. Involved in glucose-stimulated insulin secretion by promoting insulin and L-type calcium channel gene transcription. The polypeptide is DNA-binding protein RFX6 (RFX6) (Ailuropoda melanoleuca (Giant panda)).